We begin with the raw amino-acid sequence, 457 residues long: Multidrug resistance protein MdtK (457 aa).

12 helical membrane passes run 11–31 (LLAL…MGFV), 53–73 (IWLP…PVIA), 93–113 (WLVA…GHII), 127–147 (AIGY…FQVL), 160–180 (GMVI…IFIY), 188–208 (LGGV…YLLM), 239–259 (IAIG…FAVV), 277–297 (ALNF…AATI), 316–336 (RTAI…TIVL), 357–377 (LMLL…GSGV), 387–407 (IFFI…YLLA), and 418–438 (PSGF…MMAL).

Belongs to the multi antimicrobial extrusion (MATE) (TC 2.A.66.1) family. MdtK subfamily.

The protein resides in the cell inner membrane. Functionally, multidrug efflux pump that functions probably as a Na(+)/drug antiporter. The sequence is that of Multidrug resistance protein MdtK from Edwardsiella ictaluri (strain 93-146).